A 729-amino-acid chain; its full sequence is Zorya protein ZorA (729 aa).

3 consecutive transmembrane segments (helical) span residues 20–40, 135–155, and 177–197; these read PATV…FYFF, LPGI…MIGL, and VLYA…ITWL.

It belongs to the MotA family.

It localises to the cell inner membrane. In terms of biological role, component of antiviral defense system Zorya type I, composed of ZorA, ZorB, ZorC and ZorD. Expression of Zorya type I in E.coli (strain MG1655) confers 10,000-fold resistance to phage SECphi27, 100-fold resistance to lambda, and 10-fold resistance to T7. While most T7 infected Zorya-containing cells undergo abortive infection, a minority produce viable phage progeny. These eventually accumulate to a high multiplicity of infection, leading to culture collapse by 2 hours after initial infection. ZorA and ZorB probably assemble in the cell inner membrane and exert their effect there. The protein is Zorya protein ZorA of Escherichia coli O139:H28 (strain E24377A / ETEC).